Consider the following 740-residue polypeptide: Elongation factor 2 (740 aa).

One can recognise a tr-type G domain in the interval 23-264; the sequence is AQIRNAGTLA…MIIEHVPPPN (242 aa). Residues 32–39, 98–102, and 152–155 contribute to the GTP site; these read AHVDHGKT, DTPGH, and NKID. Diphthamide is present on His605.

The protein belongs to the TRAFAC class translation factor GTPase superfamily. Classic translation factor GTPase family. EF-G/EF-2 subfamily.

The protein resides in the cytoplasm. Functionally, catalyzes the GTP-dependent ribosomal translocation step during translation elongation. During this step, the ribosome changes from the pre-translocational (PRE) to the post-translocational (POST) state as the newly formed A-site-bound peptidyl-tRNA and P-site-bound deacylated tRNA move to the P and E sites, respectively. Catalyzes the coordinated movement of the two tRNA molecules, the mRNA and conformational changes in the ribosome. The chain is Elongation factor 2 from Pyrobaculum arsenaticum (strain DSM 13514 / JCM 11321 / PZ6).